The following is a 106-amino-acid chain: Somatoliberin (106 aa).

An N-terminal signal peptide occupies residues Met1 to Gly19. Positions Ser20–Arg30 are excised as a propeptide. The residue at position 74 (Leu74) is a Leucine amide. The propeptide occupies Gln77–Gly106.

The protein belongs to the glucagon family.

Its subcellular location is the secreted. Functionally, GRF is released by the hypothalamus and acts on the adenohypophyse to stimulate the secretion of growth hormone. The chain is Somatoliberin (GHRH) from Bos taurus (Bovine).